A 336-amino-acid chain; its full sequence is NADH-cytochrome b5 reductase 2 (336 aa).

Residues 28-50 form a helical membrane-spanning segment; the sequence is GGSSNGALYVGIGAAGLAGAYIY. Residues 84 to 189 form the FAD-binding FR-type domain; sequence QGFISLLLDK…KGPIPKYPWS (106 aa). 192–227 provides a ligand contact to FAD; the sequence is KHEHIALIAGGTGITPMWQTARAIFKNPEDKTKVTL.

Belongs to the flavoprotein pyridine nucleotide cytochrome reductase family. It depends on FAD as a cofactor.

The protein resides in the mitochondrion outer membrane. The catalysed reaction is 2 Fe(III)-[cytochrome b5] + NADH = 2 Fe(II)-[cytochrome b5] + NAD(+) + H(+). In terms of biological role, may mediate the reduction of outer membrane cytochrome b5. This is NADH-cytochrome b5 reductase 2 (MCR1) from Phaeosphaeria nodorum (strain SN15 / ATCC MYA-4574 / FGSC 10173) (Glume blotch fungus).